Here is a 294-residue protein sequence, read N- to C-terminus: Acetyl-coenzyme A carboxylase carboxyl transferase subunit beta (294 aa).

The CoA carboxyltransferase N-terminal domain occupies I30–E294. Positions 34, 37, 53, and 56 each coordinate Zn(2+). Residues C34–C56 form a C4-type zinc finger.

It belongs to the AccD/PCCB family. Acetyl-CoA carboxylase is a heterohexamer composed of biotin carboxyl carrier protein (AccB), biotin carboxylase (AccC) and two subunits each of ACCase subunit alpha (AccA) and ACCase subunit beta (AccD). It depends on Zn(2+) as a cofactor.

Its subcellular location is the cytoplasm. The catalysed reaction is N(6)-carboxybiotinyl-L-lysyl-[protein] + acetyl-CoA = N(6)-biotinyl-L-lysyl-[protein] + malonyl-CoA. The protein operates within lipid metabolism; malonyl-CoA biosynthesis; malonyl-CoA from acetyl-CoA: step 1/1. In terms of biological role, component of the acetyl coenzyme A carboxylase (ACC) complex. Biotin carboxylase (BC) catalyzes the carboxylation of biotin on its carrier protein (BCCP) and then the CO(2) group is transferred by the transcarboxylase to acetyl-CoA to form malonyl-CoA. The chain is Acetyl-coenzyme A carboxylase carboxyl transferase subunit beta from Listeria monocytogenes serotype 4a (strain HCC23).